The sequence spans 150 residues: Cytochrome c oxidase subunit 5A, mitochondrial (150 aa).

A mitochondrion-targeting transit peptide spans 1 to 41 (MLGAALRRCAVAATAWAGPRGLLHSAPTPGPAAAIHSVRCY). Positions 2-17 (LGAALRRCAVAATAWA) match the SIFI-degron motif. An N6-acetyllysine mark is found at Lys87 and Lys113. Residue Thr141 is modified to Phosphothreonine.

This sequence belongs to the cytochrome c oxidase subunit 5A family. Component of the cytochrome c oxidase (complex IV, CIV), a multisubunit enzyme composed of 14 subunits. The complex is composed of a catalytic core of 3 subunits MT-CO1, MT-CO2 and MT-CO3, encoded in the mitochondrial DNA, and 11 supernumerary subunits COX4I, COX5A, COX5B, COX6A, COX6B, COX6C, COX7A, COX7B, COX7C, COX8 and NDUFA4, which are encoded in the nuclear genome. The complex exists as a monomer or a dimer and forms supercomplexes (SCs) in the inner mitochondrial membrane with NADH-ubiquinone oxidoreductase (complex I, CI) and ubiquinol-cytochrome c oxidoreductase (cytochrome b-c1 complex, complex III, CIII), resulting in different assemblies (supercomplex SCI(1)III(2)IV(1) and megacomplex MCI(2)III(2)IV(2)). Interacts with AFG1L. Interacts with RAB5IF. In response to mitochondrial stress, the precursor protein is ubiquitinated by the SIFI complex in the cytoplasm before mitochondrial import, leading to its degradation. Within the SIFI complex, UBR4 initiates ubiquitin chain that are further elongated or branched by KCMF1.

It is found in the mitochondrion inner membrane. It participates in energy metabolism; oxidative phosphorylation. Component of the cytochrome c oxidase, the last enzyme in the mitochondrial electron transport chain which drives oxidative phosphorylation. The respiratory chain contains 3 multisubunit complexes succinate dehydrogenase (complex II, CII), ubiquinol-cytochrome c oxidoreductase (cytochrome b-c1 complex, complex III, CIII) and cytochrome c oxidase (complex IV, CIV), that cooperate to transfer electrons derived from NADH and succinate to molecular oxygen, creating an electrochemical gradient over the inner membrane that drives transmembrane transport and the ATP synthase. Cytochrome c oxidase is the component of the respiratory chain that catalyzes the reduction of oxygen to water. Electrons originating from reduced cytochrome c in the intermembrane space (IMS) are transferred via the dinuclear copper A center (CU(A)) of subunit 2 and heme A of subunit 1 to the active site in subunit 1, a binuclear center (BNC) formed by heme A3 and copper B (CU(B)). The BNC reduces molecular oxygen to 2 water molecules using 4 electrons from cytochrome c in the IMS and 4 protons from the mitochondrial matrix. This chain is Cytochrome c oxidase subunit 5A, mitochondrial (COX5A), found in Saimiri sciureus (Common squirrel monkey).